The primary structure comprises 267 residues: Apolipoprotein A-I (267 aa).

Positions 1 to 18 (MKAAVLTLAVLFLTGSQA) are cleaved as a signal peptide. 2 tandem repeats follow at residues 68-89 (LKLL…EQLG) and 90-111 (PVTQ…QEMS). A 10 X approximate tandem repeats region spans residues 68–267 (LKLLDNWDSV…EEYTKKLNTQ (200 aa)). Met110 carries the methionine sulfoxide modification. The 3; half-length repeat unit spans residues 112–122 (KDLEEVKAKVQ). Tandem repeats lie at residues 123 to 144 (PYLD…QKVE), 145 to 166 (PLRA…EKLS), 167 to 188 (PLGE…THLA), 189 to 210 (PYSD…ENGG), and 211 to 232 (ARLA…EKAK). A Methionine sulfoxide modification is found at Met136. The stretch at 233-243 (PALEDLRQGLL) is one 9; half-length repeat. The stretch at 244 to 267 (PVLESFKVSFLSALEEYTKKLNTQ) is repeat 10.

This sequence belongs to the apolipoprotein A1/A4/E family. As to quaternary structure, homodimer. Interacts with APOA1BP and CLU. Component of a sperm activating protein complex (SPAP), consisting of APOA1, an immunoglobulin heavy chain, an immunoglobulin light chain and albumin. Interacts with NDRG1. Interacts with SCGB3A2. Interacts with NAXE and YJEFN3. In terms of processing, glycosylated. Post-translationally, palmitoylated. Phosphorylation sites are present in the extracellular medium. As to expression, major protein of plasma HDL, also found in chylomicrons.

Its subcellular location is the secreted. Participates in the reverse transport of cholesterol from tissues to the liver for excretion by promoting cholesterol efflux from tissues and by acting as a cofactor for the lecithin cholesterol acyltransferase (LCAT). As part of the SPAP complex, activates spermatozoa motility. This chain is Apolipoprotein A-I (APOA1), found in Pan paniscus (Pygmy chimpanzee).